The following is a 561-amino-acid chain: Putative transport protein YbjL (561 aa).

The next 5 helical transmembrane spans lie at 8–28 (LLNGNYILLLFVVLALGLCLG), 32–52 (LGSIQLGNSIGVLVVSLLLGQ), 66–86 (FMLFIFCVGVEAGPNFFSIFF), 94–114 (MLALVMVGSALVIALGLGKLF), and 158–178 (NLSLGYALTYLIGLVSLIVGA). 2 RCK C-terminal domains span residues 200–288 (RGLD…SFRN) and 292–373 (VFDR…RIGF). 5 helical membrane passes run 383-403 (LLAFCAFFVIGLMIGMITFQF), 406-426 (FSFGMGNAAGLLFAGIMLGFM), 451-471 (VFMAGVGLSAGSGINNGLGAI), 475-495 (MLIAGLIVSLVPVVICFLFGA), and 540-560 (AIANVLLTLAGTIIVMVWPGL).

This sequence belongs to the AAE transporter (TC 2.A.81) family. YbjL subfamily.

It is found in the cell membrane. The polypeptide is Putative transport protein YbjL (Shigella flexneri).